Reading from the N-terminus, the 892-residue chain is DNA mismatch repair protein MutS (892 aa).

634-641 (GPNMGGKS) provides a ligand contact to ATP.

It belongs to the DNA mismatch repair MutS family.

This protein is involved in the repair of mismatches in DNA. It is possible that it carries out the mismatch recognition step. This protein has a weak ATPase activity. The chain is DNA mismatch repair protein MutS from Paraburkholderia phymatum (strain DSM 17167 / CIP 108236 / LMG 21445 / STM815) (Burkholderia phymatum).